Reading from the N-terminus, the 153-residue chain is 3-hydroxyacyl-[acyl-carrier-protein] dehydratase FabZ (153 aa).

Residue H53 is part of the active site.

Belongs to the thioester dehydratase family. FabZ subfamily.

It is found in the cytoplasm. It catalyses the reaction a (3R)-hydroxyacyl-[ACP] = a (2E)-enoyl-[ACP] + H2O. Functionally, involved in unsaturated fatty acids biosynthesis. Catalyzes the dehydration of short chain beta-hydroxyacyl-ACPs and long chain saturated and unsaturated beta-hydroxyacyl-ACPs. This is 3-hydroxyacyl-[acyl-carrier-protein] dehydratase FabZ from Lawsonia intracellularis (strain PHE/MN1-00).